Here is a 103-residue protein sequence, read N- to C-terminus: Sec-independent protein translocase protein TatA (103 aa).

The chain crosses the membrane as a helical span at residues 1 to 21; sequence MSLGPWEIAIIVLLIIVLFGA. The segment at 42–103 is disordered; that stretch reads VKEMQKDDET…QNYEDPNRTP (62 aa). The span at 52–90 shows a compositional bias: low complexity; that stretch reads PAQPEQQPQGYQHPQQIEAPQNLQQPNFQQHYQNQPQQP. Residues 94-103 show a composition bias toward basic and acidic residues; sequence QNYEDPNRTP.

This sequence belongs to the TatA/E family. The Tat system comprises two distinct complexes: a TatABC complex, containing multiple copies of TatA, TatB and TatC subunits, and a separate TatA complex, containing only TatA subunits. Substrates initially bind to the TatABC complex, which probably triggers association of the separate TatA complex to form the active translocon.

The protein localises to the cell membrane. In terms of biological role, part of the twin-arginine translocation (Tat) system that transports large folded proteins containing a characteristic twin-arginine motif in their signal peptide across membranes. TatA could form the protein-conducting channel of the Tat system. In Corynebacterium efficiens (strain DSM 44549 / YS-314 / AJ 12310 / JCM 11189 / NBRC 100395), this protein is Sec-independent protein translocase protein TatA.